The chain runs to 286 residues: Nucleotide-binding protein HAPS_0087 (286 aa).

Position 8–15 (8–15 (GRSGSGKS)) interacts with ATP. 56 to 59 (DVRN) contributes to the GTP binding site.

It belongs to the RapZ-like family.

In terms of biological role, displays ATPase and GTPase activities. This chain is Nucleotide-binding protein HAPS_0087, found in Glaesserella parasuis serovar 5 (strain SH0165) (Haemophilus parasuis).